Here is a 128-residue protein sequence, read N- to C-terminus: Large ribosomal subunit protein bL12 (128 aa).

Belongs to the bacterial ribosomal protein bL12 family. Homodimer. Part of the ribosomal stalk of the 50S ribosomal subunit. Forms a multimeric L10(L12)X complex, where L10 forms an elongated spine to which 2 to 4 L12 dimers bind in a sequential fashion. Binds GTP-bound translation factors.

Its function is as follows. Forms part of the ribosomal stalk which helps the ribosome interact with GTP-bound translation factors. Is thus essential for accurate translation. This Thermotoga petrophila (strain ATCC BAA-488 / DSM 13995 / JCM 10881 / RKU-1) protein is Large ribosomal subunit protein bL12.